Consider the following 299-residue polypeptide: 4-hydroxy-tetrahydrodipicolinate synthase (299 aa).

Thr-51 provides a ligand contact to pyruvate. The active-site Proton donor/acceptor is the Tyr-139. Lys-167 (schiff-base intermediate with substrate) is an active-site residue. Ile-209 contacts pyruvate.

The protein belongs to the DapA family. As to quaternary structure, homotetramer; dimer of dimers.

It is found in the cytoplasm. The enzyme catalyses L-aspartate 4-semialdehyde + pyruvate = (2S,4S)-4-hydroxy-2,3,4,5-tetrahydrodipicolinate + H2O + H(+). It participates in amino-acid biosynthesis; L-lysine biosynthesis via DAP pathway; (S)-tetrahydrodipicolinate from L-aspartate: step 3/4. Functionally, catalyzes the condensation of (S)-aspartate-beta-semialdehyde [(S)-ASA] and pyruvate to 4-hydroxy-tetrahydrodipicolinate (HTPA). The polypeptide is 4-hydroxy-tetrahydrodipicolinate synthase (Methylobacterium radiotolerans (strain ATCC 27329 / DSM 1819 / JCM 2831 / NBRC 15690 / NCIMB 10815 / 0-1)).